Reading from the N-terminus, the 104-residue chain is Small ribosomal subunit protein bS16 (104 aa).

Belongs to the bacterial ribosomal protein bS16 family.

The polypeptide is Small ribosomal subunit protein bS16 (Wolbachia pipientis subsp. Culex pipiens (strain wPip)).